Here is a 136-residue protein sequence, read N- to C-terminus: Large ribosomal subunit protein uL16c (136 aa).

This sequence belongs to the universal ribosomal protein uL16 family. In terms of assembly, part of the 50S ribosomal subunit.

The protein resides in the plastid. It localises to the chloroplast. This is Large ribosomal subunit protein uL16c from Mesostigma viride (Green alga).